Reading from the N-terminus, the 188-residue chain is Phosphoribosylglycinamide formyltransferase (188 aa).

12–14 (GSN) is a N(1)-(5-phospho-beta-D-ribosyl)glycinamide binding site. (6R)-10-formyltetrahydrofolate contacts are provided by residues lysine 66, 91–94 (MRLI), and asparagine 108. Residue histidine 110 is the Proton donor of the active site.

The protein belongs to the GART family.

The enzyme catalyses N(1)-(5-phospho-beta-D-ribosyl)glycinamide + (6R)-10-formyltetrahydrofolate = N(2)-formyl-N(1)-(5-phospho-beta-D-ribosyl)glycinamide + (6S)-5,6,7,8-tetrahydrofolate + H(+). It participates in purine metabolism; IMP biosynthesis via de novo pathway; N(2)-formyl-N(1)-(5-phospho-D-ribosyl)glycinamide from N(1)-(5-phospho-D-ribosyl)glycinamide (10-formyl THF route): step 1/1. Catalyzes the transfer of a formyl group from 10-formyltetrahydrofolate to 5-phospho-ribosyl-glycinamide (GAR), producing 5-phospho-ribosyl-N-formylglycinamide (FGAR) and tetrahydrofolate. The polypeptide is Phosphoribosylglycinamide formyltransferase (Staphylococcus aureus (strain MSSA476)).